The following is a 197-amino-acid chain: Guanylate kinase (197 aa).

Residue Ser-2 is modified to N-acetylserine. One can recognise a Guanylate kinase-like domain in the interval 4–186 (PRPVVLSGPS…AYAELKEALS (183 aa)). 14–19 (GAGKST) provides a ligand contact to ATP. Residue 37-51 (SHTTRNPRPGEENGK) participates in substrate binding. Active-site residues include Arg-44, Arg-137, and Arg-148. ATP is bound at residue Arg-137. Residue 171–172 (ND) participates in ATP binding.

This sequence belongs to the guanylate kinase family. As to quaternary structure, monomer. Interacts with RD3. Widely expressed.

The protein localises to the photoreceptor inner segment. It is found in the cytoplasm. The protein resides in the cytosol. Its subcellular location is the mitochondrion. The catalysed reaction is GMP + ATP = GDP + ADP. Its activity is regulated as follows. Up-regulated by RD3. Catalyzes the phosphorylation of GMP to GDP. Essential enzyme for recycling GMP and indirectly, cyclic GMP (cGMP). Involved in the cGMP metabolism in photoreceptors. It may also have a role in the survival and growth progression of some tumors. In addition to its physiological role, GUK1 is essential for converting prodrugs used for the treatment of cancers and viral infections into their pharmacologically active metabolites, most notably acyclovir, ganciclovir, and 6-thioguanine and its closely related analog 6-mercaptopurine. The chain is Guanylate kinase from Homo sapiens (Human).